A 231-amino-acid chain; its full sequence is Platelet-activating factor acetylhydrolase IB subunit alpha1 (231 aa).

S2 carries the N-acetylserine modification. A Phosphoserine modification is found at S2. Active-site residues include S47, D192, and H195.

This sequence belongs to the 'GDSL' lipolytic enzyme family. Platelet-activating factor acetylhydrolase IB beta/gamma subunits subfamily. As to quaternary structure, forms a catalytic dimer which is either homodimer (alpha1/alpha1 homodimer) or heterodimer with PAFAH1B2 (alpha1/alpha2 heterodimer). Component of the cytosolic (PAF-AH (I)) heterotetrameric enzyme, which is composed of PAFAH1B1 (beta), PAFAH1B2 (alpha2) and PAFAH1B3 (alpha1) subunits. The catalytic activity of the enzyme resides in the alpha1 (PAFAH1B3) and alpha2 (PAFAH1B2) subunits, whereas the beta subunit (PAFAH1B1) has regulatory activity. Trimer formation is not essential for the catalytic activity. Interacts with VLDLR; this interaction may modulate the Reelin pathway. In the adult, expressed in brain, skeletal muscle, kidney, thymus, spleen, colon, testis, ovary and peripheral blood leukocytes. In the fetus, highest expression occurs in brain.

It localises to the cytoplasm. It catalyses the reaction a 1-O-alkyl-2-acetyl-sn-glycero-3-phosphocholine + H2O = a 1-O-alkyl-sn-glycero-3-phosphocholine + acetate + H(+). It carries out the reaction 1-O-hexadecyl-2-acetyl-sn-glycero-3-phosphocholine + H2O = 1-O-hexadecyl-sn-glycero-3-phosphocholine + acetate + H(+). The catalysed reaction is 1-O-hexadecyl-2-acetyl-sn-glycero-3-phosphate + H2O = 1-O-hexadecyl-sn-glycero-3-phosphate + acetate + H(+). With respect to regulation, beta subunit (PAFAH1B1) inhibits the acetylhydrolase activity of the alpha1/alpha1 catalytic homodimer. Alpha1 catalytic subunit of the cytosolic type I platelet-activating factor (PAF) acetylhydrolase (PAF-AH (I)) heterotetrameric enzyme that catalyzes the hydrolyze of the acetyl group at the sn-2 position of PAF and its analogs and modulates the action of PAF. The activity and substrate specificity of PAF-AH (I) are affected by its subunit composition. Both alpha1/alpha1 homodimer (PAFAH1B3/PAFAH1B3 homodimer) and alpha1/alpha2 heterodimer(PAFAH1B3/PAFAH1B2 heterodimer) hydrolyze 1-O-alkyl-2-acetyl-sn-glycero-3-phosphoric acid (AAGPA) more efficiently than PAF, but they have little hydrolytic activity towards 1-O-alkyl-2-acetyl-sn-glycero-3-phosphorylethanolamine (AAGPE). Plays an important role during the development of brain. This is Platelet-activating factor acetylhydrolase IB subunit alpha1 from Homo sapiens (Human).